The sequence spans 217 residues: DNA-binding transcriptional activator DevR/DosR (217 aa).

A Response regulatory domain is found at 3–119 (KVFLVDDHEV…ELARAVKDVG (117 aa)). The residue at position 54 (Asp54) is a 4-aspartylphosphate. Positions 143 to 208 (KQDPLSGLTD…QAAVFATELK (66 aa)) constitute an HTH luxR-type domain. Residues 167 to 186 (NKQIADRMFLAEKTVKNYVS) constitute a DNA-binding region (H-T-H motif). Phosphothreonine; by PknH occurs at positions 198 and 205.

Homodimer. Interacts with NarL. Post-translationally, phosphorylated on Asp-54 by both DevS (DosS) and DosT. Phosphorylated on Thr-198 and Thr-205 by PknH, which enhances DevR dimerization. Aspartate phosphorylation and threonine phosphorylation cooperatively enhance DevR binding to DNA.

The protein localises to the cytoplasm. The protein resides in the host cytoplasmic vesicle. Its subcellular location is the host phagosome. Functionally, member of the two-component regulatory system DevR/DevS (also called DosR/DosS) involved in onset of the dormancy response. Regulates an approximately 48-member regulon. When phosphorylated binds and activates the promoter of DevR regulon genes in response to hypoxia. The presence of target DNA increases stability of phospho-DevR in vitro. Activates its own transcription under hypoxic but not aerobic conditions, probably binds as a dimer to tandem binding sites within the devR and hspX promoters. Accepts a phosphate group from DevS (DosS) and from DosT. Does not regulate transcription of dosT. The protein is DNA-binding transcriptional activator DevR/DosR of Mycobacterium tuberculosis (strain ATCC 25618 / H37Rv).